A 640-amino-acid chain; its full sequence is Ribonuclease J (640 aa).

Positions 75, 77, 79, 80, 145, and 167 each coordinate Zn(2+). 368–372 (HVSGH) contacts substrate. H394 is a binding site for Zn(2+). The tract at residues 578 to 640 (TVSATSATPA…RKRSTTSVSS (63 aa)) is disordered. Residues 598–610 (PEPKVKAKPEKKV) are compositionally biased toward basic and acidic residues.

It belongs to the metallo-beta-lactamase superfamily. RNA-metabolizing metallo-beta-lactamase-like family. Bacterial RNase J subfamily. As to quaternary structure, homodimer, may be a subunit of the RNA degradosome. Zn(2+) serves as cofactor.

It is found in the cytoplasm. In terms of biological role, an RNase that has 5'-3' exonuclease and possibly endoonuclease activity. Involved in maturation of rRNA and in some organisms also mRNA maturation and/or decay. The polypeptide is Ribonuclease J (Synechocystis sp. (strain ATCC 27184 / PCC 6803 / Kazusa)).